We begin with the raw amino-acid sequence, 840 residues long: Telomere length regulation protein TEL2 homolog (840 aa).

M1 bears the N-acetylmethionine mark. Residues P374, P419, and P422 each carry the hydroxyproline modification. The disordered stretch occupies residues 443–497 (PEPAGDCSSVSRGPSPAPVDTESPVEMPEKAVESDVPPTQPQGSDSELDSDDEFI). At S457 the chain carries Phosphoserine. S486 is subject to Phosphoserine; by CK2. S488, S492, and S837 each carry phosphoserine. The span at 488-497 (SELDSDDEFI) shows a compositional bias: acidic residues.

It belongs to the TEL2 family. In terms of assembly, component of the TTT complex composed of TELO2, TTI1 and TTI2. Interacts with ATM, ATR, MTOR, PRKDC, RUVBL2, TTI1, TTI2, SMG1 and TRRAP. Component of the mTORC1 and mTORC2 complexes. Interacts (phosphorylated form) with PIH1D1. Interaction with PIH1D1 mediates interaction of TELO2 with the R2TP complex composed of RUVBL1, RUVBL2, PIH1D1, and RPAP3. Post-translationally, hydroxylation by PHD3 is required for a proper interaction with ATR, and activation of the ATR/CHK1/p53 pathway following DNA damage. In terms of processing, phosphorylated at Ser-486 by CK2 following growth factor deprivation, leading to its subsequent ubiquitination by the SCF(FBXO9) complex. Phosphorylation by CK2 only takes place when TELO2 is bound to mTORC1, not mTORC2; leading to selective ubiquitination of mTORC1-associated protein. Ubiquitinated by the SCF(FBXO9) complex following phosphorylation by CK2 in response to growth factor deprivation, leading to its degradation by the proteasome. Only mTORC1-associated protein is ubiquitinated and degraded, leading to selective inactivation of mTORC1 to restrain cell growth and protein translation, while mTORC2 is activated due to the relief of feedback inhibition by mTORC1.

It is found in the cytoplasm. It localises to the membrane. The protein localises to the nucleus. Its subcellular location is the chromosome. The protein resides in the telomere. Functionally, regulator of the DNA damage response (DDR). Part of the TTT complex that is required to stabilize protein levels of the phosphatidylinositol 3-kinase-related protein kinase (PIKK) family proteins. The TTT complex is involved in the cellular resistance to DNA damage stresses, like ionizing radiation (IR), ultraviolet (UV) and mitomycin C (MMC). Together with the TTT complex and HSP90 may participate in the proper folding of newly synthesized PIKKs. Promotes assembly, stabilizes and maintains the activity of mTORC1 and mTORC2 complexes, which regulate cell growth and survival in response to nutrient and hormonal signals. May be involved in telomere length regulation. In Mus musculus (Mouse), this protein is Telomere length regulation protein TEL2 homolog (Telo2).